A 718-amino-acid chain; its full sequence is Pentatricopeptide repeat-containing protein At1g22960, mitochondrial (718 aa).

The N-terminal 11 residues, 1–11 (MILCLRLCLRA), are a transit peptide targeting the mitochondrion. PPR repeat units follow at residues 167-201 (ALKL…GFLP), 202-236 (SVRN…GIMP), 237-271 (TVIT…NIEF), 272-306 (SEVT…GFAV), 307-341 (TPYS…GIYP), 342-372 (TTST…MAAP), 373-407 (DVVS…DIHP), 408-442 (SIVT…LIFP), 443-477 (DVIT…GIKP), 478-512 (DGYA…DHHA), 514-548 (DLTI…GLVP), 549-583 (DHVT…RLYP), 584-618 (SVIT…GVRP), 619-653 (NVMT…GIPP), and 654-688 (NKYS…EIEP).

This sequence belongs to the PPR family. P subfamily.

Its subcellular location is the mitochondrion. This is Pentatricopeptide repeat-containing protein At1g22960, mitochondrial from Arabidopsis thaliana (Mouse-ear cress).